A 608-amino-acid chain; its full sequence is Sensor protein kinase WalK (608 aa).

Transmembrane regions (helical) follow at residues 14-34 (LVIV…LYFT) and 183-203 (IFIV…FFIA). Residues 204-256 (RTITKPITDMRNQTVEMSRGNYTQRVKIYGNDEIGELALAFNNLSKRVQEAQA) form the HAMP domain. A PAS domain is found at 261–331 (EKRRLDSVIT…EIQENNDSFL (71 aa)). The Zn(2+) site is built by histidine 271, aspartate 274, histidine 364, and glutamate 368. The PAC domain maps to 314–378 (LEDEFKLEEI…QQQVERERRE (65 aa)). The Histidine kinase domain occupies 382–600 (NVSHELRTPL…SIFITLPCEV (219 aa)). Histidine 385 is subject to Phosphohistidine; by autocatalysis.

Forms homodimers. Forms homooligomers. Autophosphorylated.

It is found in the cell membrane. The catalysed reaction is ATP + protein L-histidine = ADP + protein N-phospho-L-histidine.. By zinc. Zinc-binding negatively regulates WalK kinase activity and thus autophosphorylation. Member of the two-component regulatory system WalK/WalR that regulates genes involved in cell wall metabolism, virulence regulation, biofilm production, oxidative stress resistance and antibiotic resistance via direct or indirect regulation of autolysins. Functions as a sensor protein kinase which is autophosphorylated at a histidine residue in the dimerization domain and transfers its phosphate group to the conserved aspartic acid residue in the regulatory domain of WalR. In turn, WalR binds to the upstream promoter regions of the target genes to positively and negatively regulate their expression. The protein is Sensor protein kinase WalK (walK) of Staphylococcus aureus (strain Newman).